The following is a 308-amino-acid chain: tRNA dimethylallyltransferase (308 aa).

Residue 19–26 (GPTASGKS) coordinates ATP. Position 21 to 26 (21 to 26 (TASGKS)) interacts with substrate. An interaction with substrate tRNA region spans residues 44-47 (DSMQ).

This sequence belongs to the IPP transferase family. Monomer. Mg(2+) is required as a cofactor.

It carries out the reaction adenosine(37) in tRNA + dimethylallyl diphosphate = N(6)-dimethylallyladenosine(37) in tRNA + diphosphate. In terms of biological role, catalyzes the transfer of a dimethylallyl group onto the adenine at position 37 in tRNAs that read codons beginning with uridine, leading to the formation of N6-(dimethylallyl)adenosine (i(6)A). The chain is tRNA dimethylallyltransferase from Methylobacterium radiotolerans (strain ATCC 27329 / DSM 1819 / JCM 2831 / NBRC 15690 / NCIMB 10815 / 0-1).